The sequence spans 225 residues: Pyrimidine 5'-nucleotidase YjjG (225 aa).

Asp-9 functions as the Nucleophile in the catalytic mechanism.

Belongs to the HAD-like hydrolase superfamily. YjjG family. Monomer, homodimer and possibly homotetramer in solution. It depends on Mn(2+) as a cofactor. Mg(2+) is required as a cofactor. The cofactor is Co(2+).

The protein resides in the cytoplasm. The catalysed reaction is a ribonucleoside 5'-phosphate + H2O = a ribonucleoside + phosphate. It carries out the reaction a 2'-deoxyribonucleoside 5'-phosphate + H2O = a 2'-deoxyribonucleoside + phosphate. It catalyses the reaction UMP + H2O = uridine + phosphate. The enzyme catalyses dUMP + H2O = 2'-deoxyuridine + phosphate. The catalysed reaction is dTMP + H2O = thymidine + phosphate. In contrast to nucleotidases from other families, is not inhibited by ribo- and deoxyribonucleoside di- and triphosphates. Its function is as follows. Nucleotidase that shows high phosphatase activity toward non-canonical pyrimidine nucleotides and three canonical nucleoside 5'-monophosphates (UMP, dUMP, and dTMP), and very low activity against TDP, IMP, UDP, GMP, dGMP, AMP, dAMP, and 6-phosphogluconate. Appears to function as a house-cleaning nucleotidase in vivo, since the general nucleotidase activity of YjjG allows it to protect cells against non-canonical pyrimidine derivatives such as 5-fluoro-2'-deoxyuridine, 5-fluorouridine, 5-fluoroorotate, 5-fluorouracil, and 5-aza-2'-deoxycytidine, and prevents the incorporation of potentially mutagenic nucleotides into DNA. Its dUMP phosphatase activity that catalyzes the hydrolysis of dUMP to deoxyuridine is necessary for thymine utilization via the thymine salvage pathway. Is strictly specific to substrates with 5'-phosphates and shows no activity against nucleoside 2'- or 3'-monophosphates. In Escherichia coli (strain K12), this protein is Pyrimidine 5'-nucleotidase YjjG (yjjG).